Reading from the N-terminus, the 201-residue chain is Lipoprotein signal peptidase (201 aa).

A run of 2 helical transmembrane segments spans residues 73-93 (SNAI…YLMI) and 97-117 (TIGS…NLID). Catalysis depends on residues Asp-126 and Asp-144. The chain crosses the membrane as a helical span at residues 135–155 (YSFPVFNLADCFITIGVIILI).

Belongs to the peptidase A8 family.

Its subcellular location is the cell inner membrane. It catalyses the reaction Release of signal peptides from bacterial membrane prolipoproteins. Hydrolyzes -Xaa-Yaa-Zaa-|-(S,diacylglyceryl)Cys-, in which Xaa is hydrophobic (preferably Leu), and Yaa (Ala or Ser) and Zaa (Gly or Ala) have small, neutral side chains.. It functions in the pathway protein modification; lipoprotein biosynthesis (signal peptide cleavage). In terms of biological role, this protein specifically catalyzes the removal of signal peptides from prolipoproteins. The chain is Lipoprotein signal peptidase from Rickettsia africae (strain ESF-5).